Reading from the N-terminus, the 65-residue chain is Cecropin (65 aa).

Positions 1 to 23 (MNFVKVLFFISACILIMLSAVSG) are cleaved as a signal peptide.

Belongs to the cecropin family.

It is found in the secreted. In terms of biological role, has antibacterial activity. The polypeptide is Cecropin (LOC113514368) (Galleria mellonella (Greater wax moth)).